The primary structure comprises 89 residues: Neuropeptide S (89 aa).

An N-terminal signal peptide occupies residues 1–23 (MISSVKLNLILVLSLSTMHVFWC). Residues 24-67 (YPVPSSKVSGKSDYFLILLNSCPTRLDRSKELAFLKPILEKMFV) constitute a propeptide that is removed on maturation.

The protein localises to the secreted. Its function is as follows. Modulates arousal and anxiety. May play an important anorexigenic role. Binds to its receptor NPSR1 with nanomolar affinity to increase intracellular calcium concentrations. This Homo sapiens (Human) protein is Neuropeptide S (NPS).